We begin with the raw amino-acid sequence, 276 residues long: Large ribosomal subunit protein uL2 (276 aa).

Residues Trp213–Thr264 are disordered.

This sequence belongs to the universal ribosomal protein uL2 family. As to quaternary structure, part of the 50S ribosomal subunit. Forms a bridge to the 30S subunit in the 70S ribosome.

Functionally, one of the primary rRNA binding proteins. Required for association of the 30S and 50S subunits to form the 70S ribosome, for tRNA binding and peptide bond formation. It has been suggested to have peptidyltransferase activity; this is somewhat controversial. Makes several contacts with the 16S rRNA in the 70S ribosome. The protein is Large ribosomal subunit protein uL2 of Granulibacter bethesdensis (strain ATCC BAA-1260 / CGDNIH1).